We begin with the raw amino-acid sequence, 261 residues long: Nickel import ATP-binding protein NikD (261 aa).

One can recognise an ABC transporter domain in the interval 6-248 (LRIEGLTIAT…PRHDATRALV (243 aa)). Position 41 to 48 (41 to 48 (GASGSGKS)) interacts with ATP.

Belongs to the ABC transporter superfamily. Nickel importer (TC 3.A.1.5.3) family. As to quaternary structure, the complex is composed of two ATP-binding proteins (NikD and NikE), two transmembrane proteins (NikB and NikC) and a solute-binding protein (NikA).

Its subcellular location is the cell inner membrane. It catalyses the reaction Ni(2+)(out) + ATP + H2O = Ni(2+)(in) + ADP + phosphate + H(+). In terms of biological role, part of the ABC transporter complex NikABCDE involved in nickel import. Responsible for energy coupling to the transport system. This is Nickel import ATP-binding protein NikD from Rhodospirillum rubrum (strain ATCC 11170 / ATH 1.1.1 / DSM 467 / LMG 4362 / NCIMB 8255 / S1).